The chain runs to 1098 residues: Paired amphipathic helix protein Sin3b (1098 aa).

A compositionally biased stretch (gly residues) spans 1–25 (MAHAGSGGSAGRGFGGSRWGRSGSG). The tract at residues 1–26 (MAHAGSGGSAGRGFGGSRWGRSGSGG) is disordered. Residues 1-299 (MAHAGSGGSA…VGKYGTLQEF (299 aa)) are interaction with CRY1. PAH domains are found at residues 30–100 (LPVH…LPLG) and 145–230 (VPLE…LPEA). Residues 52-98 (PATYNGFLEIMKEFKSQSIDTPGVIRRVSQLFHEHPDLIVGFNAFLP) are interaction with REST. Over residues 238–247 (NGSCEMNSGQ) the composition is skewed to polar residues. The disordered stretch occupies residues 238 to 274 (NGSCEMNSGQKNEEKSLEHNKKRSRPSLLRPVSAPAK). Positions 275–499 (KKMKLRGTKD…CLGGTSEVIQ (225 aa)) are interaction with NCOR1. In terms of domain architecture, PAH 3 spans 283-360 (KDLSIAAVGK…AQFKSFLGVK (78 aa)). The segment at 383–550 (ASCKRIGSSY…REAQQGFNKI (168 aa)) is interaction with SUDS3 and HDAC1. The segment at 661–702 (QQCPGTSDDSADERDRDRDSAEPERRRPTDEKPPADASPEPP) is disordered. Phosphoserine is present on residues Ser-667 and Ser-670. Basic and acidic residues predominate over residues 673-694 (ERDRDRDSAEPERRRPTDEKPP).

In terms of assembly, component of the SIN3B complex, which includes SIN3B, HDAC2 or HDAC1, PHF12 and MORF4L1. Interacts with FOXK1/MNF, MXI, MAD, NCOR1 and SAP30. Interaction with SUDS3 enhances the interaction with HDAC1 to form a complex. Interacts with CRY1, HCFC1, MAD3, MAD4, MAEL, REST, RNF220 and SETDB1. Interacts with C6orf89. Interacts with MYT1L. Post-translationally, ubiquitinated by RNF220 that leads to proteasomal degradation.

It localises to the nucleus. Acts as a transcriptional repressor. Interacts with MXI1 to repress MYC responsive genes and antagonize MYC oncogenic activities. Interacts with MAD-MAX heterodimers by binding to MAD. The heterodimer then represses transcription by tethering SIN3B to DNA. Also forms a complex with FOXK1 which represses transcription. With FOXK1, regulates cell cycle progression probably by repressing cell cycle inhibitor genes expression. As part of the SIN3B complex represses transcription and counteracts the histone acetyltransferase activity of EP300 through the recognition H3K27ac marks by PHF12 and the activity of the histone deacetylase HDAC2. SIN3B complex is recruited downstream of the constitutively active genes transcriptional start sites through interaction with histones and mitigates histone acetylation and RNA polymerase II progression within transcribed regions contributing to the regulation of transcription. The protein is Paired amphipathic helix protein Sin3b (Sin3b) of Mus musculus (Mouse).